Here is a 35-residue protein sequence, read N- to C-terminus: Sperm-specific protein Phi-1 (35 aa).

Composition is skewed to basic residues over residues 1–17 (PSPT…RSRS) and 25–35 (AAKRAKSKTAK). Residues 1–35 (PSPTRRSKSRSKSRSRSRSASAGKAAKRAKSKTAK) form a disordered region.

Sperm.

The protein localises to the nucleus. Its subcellular location is the chromosome. Functionally, involved in nuclear basic protein transition: histones are replaced by spermatid specific proteins which are themselves replaced by protamines in late spermatids. The protein is Sperm-specific protein Phi-1 of Mytilus californianus (California mussel).